Consider the following 325-residue polypeptide: Aldo-keto reductase family 1 member D1 (325 aa).

NADP(+)-binding positions include 22–26 and aspartate 52; that span reads GLGTY. Residue tyrosine 26 participates in substrate binding. Residues tyrosine 57, tryptophan 88, glutamate 119, and tyrosine 131 each coordinate substrate. Residue tyrosine 57 is the Proton donor of the active site. NADP(+) is bound by residues 168-169, glutamine 192, and 218-223; these read SN and HSPLGT. The residue at position 228 (serine 228) is a Phosphoserine. Substrate is bound at residue tryptophan 229. Position 272–282 (272–282) interacts with NADP(+); it reads KSFTPERIKEN.

It belongs to the aldo/keto reductase family.

It is found in the cytoplasm. It carries out the reaction 5beta-cholestan-3-one + NADP(+) = cholest-4-en-3-one + NADPH + H(+). The catalysed reaction is 4,5beta-dihydrocortisone + NADP(+) = cortisone + NADPH + H(+). It catalyses the reaction cortisol + NADPH + H(+) = 5beta-dihydrocortisol + NADP(+). The enzyme catalyses corticosterone + NADPH + H(+) = 5beta-dihydrocorticosterone + NADP(+). It carries out the reaction 7alpha,12alpha-dihydroxycholest-4-en-3-one + NADPH + H(+) = 7alpha,12alpha-dihydroxy-5beta-cholestan-3-one + NADP(+). The catalysed reaction is 7alpha-hydroxycholest-4-en-3-one + NADPH + H(+) = 7alpha-hydroxy-5beta-cholestan-3-one + NADP(+). It catalyses the reaction epitestosterone + NADPH + H(+) = 5beta-dihydroepitestosterone + NADP(+). The enzyme catalyses androst-4-ene-3,17-dione + NADPH + H(+) = 5beta-androstane-3,17-dione + NADP(+). It carries out the reaction progesterone + NADPH + H(+) = 5beta-pregnan-3,20-dione + NADP(+). The catalysed reaction is 21-hydroxyprogesterone + NADPH + H(+) = 5beta-dihydrodeoxycorticosterone + NADP(+). It catalyses the reaction aldosterone + NADPH + H(+) = 5beta-dihydroaldosterone + NADP(+). The enzyme catalyses 17beta-hydroxyandrosta-1,4-dien-3-one + NADPH + H(+) = 17beta-hydroxy-5beta-androst-1-en-3-one + NADP(+). It carries out the reaction 17beta-hydroxyestr-4-en-3-one + NADPH + H(+) = 17beta-hydroxy-5beta-estran-3-one + NADP(+). The catalysed reaction is 5beta-dihydrotestosterone + NADP(+) = testosterone + NADPH + H(+). It catalyses the reaction androst-4-ene-3,11,17-trione + NADPH + H(+) = 17beta-hydroxyandrost-4-ene-3,11-dione + NADP(+). Subject to inhibition by high substrate concentrations. Inhibited by testosterone concentrations above 10 uM. Inhibited by the primary and secondary bile acids chenodeoxycholic acid and ursodeoxycholic acid. Its function is as follows. Catalyzes the stereospecific NADPH-dependent reduction of the C4-C5 double bond of bile acid intermediates and steroid hormones carrying a delta(4)-3-one structure to yield an A/B cis-ring junction. This cis-configuration is crucial for bile acid biosynthesis and plays important roles in steroid metabolism. Capable of reducing a broad range of delta-(4)-3-ketosteroids from C18 (such as, 17beta-hydroxyestr-4-en-3-one) to C27 (such as, 7alpha-hydroxycholest-4-en-3-one). This Mus musculus (Mouse) protein is Aldo-keto reductase family 1 member D1 (Akr1d1).